The chain runs to 338 residues: Holliday junction branch migration complex subunit RuvB (338 aa).

A disordered region spans residues 1 to 22 (MIEADRLIHAEPQGPEERDEQI). Residues 4–187 (ADRLIHAEPQ…FGIPLRLEFY (184 aa)) form a large ATPase domain (RuvB-L) region. ATP contacts are provided by residues Arg27, Gly68, Lys71, Thr72, Thr73, 134 to 136 (EDY), Arg177, Tyr187, and Arg224. Thr72 lines the Mg(2+) pocket. The segment at 188–258 (NTKDLSSIVS…VADLALDMLD (71 aa)) is small ATPAse domain (RuvB-S). Positions 261–338 (SEGFDYMDRK…RHFDIIQPEK (78 aa)) are head domain (RuvB-H). 3 residues coordinate DNA: Arg297, Arg316, and Arg321.

This sequence belongs to the RuvB family. In terms of assembly, homohexamer. Forms an RuvA(8)-RuvB(12)-Holliday junction (HJ) complex. HJ DNA is sandwiched between 2 RuvA tetramers; dsDNA enters through RuvA and exits via RuvB. An RuvB hexamer assembles on each DNA strand where it exits the tetramer. Each RuvB hexamer is contacted by two RuvA subunits (via domain III) on 2 adjacent RuvB subunits; this complex drives branch migration. In the full resolvosome a probable DNA-RuvA(4)-RuvB(12)-RuvC(2) complex forms which resolves the HJ.

The protein resides in the cytoplasm. The enzyme catalyses ATP + H2O = ADP + phosphate + H(+). Its function is as follows. The RuvA-RuvB-RuvC complex processes Holliday junction (HJ) DNA during genetic recombination and DNA repair, while the RuvA-RuvB complex plays an important role in the rescue of blocked DNA replication forks via replication fork reversal (RFR). RuvA specifically binds to HJ cruciform DNA, conferring on it an open structure. The RuvB hexamer acts as an ATP-dependent pump, pulling dsDNA into and through the RuvAB complex. RuvB forms 2 homohexamers on either side of HJ DNA bound by 1 or 2 RuvA tetramers; 4 subunits per hexamer contact DNA at a time. Coordinated motions by a converter formed by DNA-disengaged RuvB subunits stimulates ATP hydrolysis and nucleotide exchange. Immobilization of the converter enables RuvB to convert the ATP-contained energy into a lever motion, pulling 2 nucleotides of DNA out of the RuvA tetramer per ATP hydrolyzed, thus driving DNA branch migration. The RuvB motors rotate together with the DNA substrate, which together with the progressing nucleotide cycle form the mechanistic basis for DNA recombination by continuous HJ branch migration. Branch migration allows RuvC to scan DNA until it finds its consensus sequence, where it cleaves and resolves cruciform DNA. The chain is Holliday junction branch migration complex subunit RuvB from Shewanella sediminis (strain HAW-EB3).